The chain runs to 282 residues: 2-dehydro-3-deoxyphosphooctonate aldolase (282 aa).

It belongs to the KdsA family.

The protein resides in the cytoplasm. It catalyses the reaction D-arabinose 5-phosphate + phosphoenolpyruvate + H2O = 3-deoxy-alpha-D-manno-2-octulosonate-8-phosphate + phosphate. It participates in carbohydrate biosynthesis; 3-deoxy-D-manno-octulosonate biosynthesis; 3-deoxy-D-manno-octulosonate from D-ribulose 5-phosphate: step 2/3. It functions in the pathway bacterial outer membrane biogenesis; lipopolysaccharide biosynthesis. This is 2-dehydro-3-deoxyphosphooctonate aldolase from Shewanella sediminis (strain HAW-EB3).